Here is a 186-residue protein sequence, read N- to C-terminus: MPKPTKGPRLGGSSSHQKALLANLATSLFEHGRIKTTEPKARALRPYAEKLITHAKKGALHNRREVLKKIRDKDVVHVLFEEIGPFFADRNGGYTRIIKVEPRKGDNAPMAVIELVREKTVTSEADRARRVKASKKAPEAAAAAPQAAVEPEAVEAAPAPDAPEAAPEAEAAAPQPADEAEGSSED.

Positions 123-186 are disordered; it reads SEADRARRVK…ADEAEGSSED (64 aa). A compositionally biased stretch (low complexity) spans 139 to 177; the sequence is EAAAAAPQAAVEPEAVEAAPAPDAPEAAPEAEAAAPQPA.

This sequence belongs to the bacterial ribosomal protein bL17 family. In terms of assembly, part of the 50S ribosomal subunit. Contacts protein L32.

The protein is Large ribosomal subunit protein bL17 of Mycobacterium avium (strain 104).